Here is a 163-residue protein sequence, read N- to C-terminus: Protein YtsP (163 aa).

Belongs to the free Met sulfoxide reductase family.

In Bacillus subtilis (strain 168), this protein is Protein YtsP (ytsP).